The sequence spans 131 residues: C-type natriuretic peptide 2 (131 aa).

An N-terminal signal peptide occupies residues 1–22 (MLYPALLCAALLLIAPLGHTEG). Positions 23-109 (RTLYPSPDAI…KRAVTDRSRR (87 aa)) are excised as a propeptide. Residues Cys115 and Cys131 are joined by a disulfide bond.

This sequence belongs to the natriuretic peptide family. Expressed in brain and to a low extent in atrium.

Its subcellular location is the secreted. Exhibits natriuretic and vasodepressor activity. Has a cGMP-stimulating activity. This chain is C-type natriuretic peptide 2, found in Oncorhynchus mykiss (Rainbow trout).